Here is a 125-residue protein sequence, read N- to C-terminus: Upsalin (125 aa).

An N-terminal signal peptide occupies residues 1–16 (MFPTHVLLIVIACVTA).

Post-translationally, weakly glycosylated. Expressed at highest levels in mantle, followed by adductor muscle. Found in the nacreous shell layer (at protein level).

It localises to the secreted. This is Upsalin from Unio pictorum (Painter's mussel).